A 341-amino-acid polypeptide reads, in one-letter code: N-acetyl-gamma-glutamyl-phosphate reductase (341 aa).

Cysteine 147 is a catalytic residue.

It belongs to the NAGSA dehydrogenase family. Type 1 subfamily.

It is found in the cytoplasm. It catalyses the reaction N-acetyl-L-glutamate 5-semialdehyde + phosphate + NADP(+) = N-acetyl-L-glutamyl 5-phosphate + NADPH + H(+). It participates in amino-acid biosynthesis; L-arginine biosynthesis; N(2)-acetyl-L-ornithine from L-glutamate: step 3/4. In terms of biological role, catalyzes the NADPH-dependent reduction of N-acetyl-5-glutamyl phosphate to yield N-acetyl-L-glutamate 5-semialdehyde. This Dehalococcoides mccartyi (strain ATCC BAA-2266 / KCTC 15142 / 195) (Dehalococcoides ethenogenes (strain 195)) protein is N-acetyl-gamma-glutamyl-phosphate reductase.